A 92-amino-acid polypeptide reads, in one-letter code: Small ribosomal subunit protein uS19 (92 aa).

This sequence belongs to the universal ribosomal protein uS19 family.

Its function is as follows. Protein S19 forms a complex with S13 that binds strongly to the 16S ribosomal RNA. The polypeptide is Small ribosomal subunit protein uS19 (Streptococcus thermophilus (strain ATCC BAA-491 / LMD-9)).